We begin with the raw amino-acid sequence, 598 residues long: Polypeptide N-acetylgalactosaminyltransferase 17 (598 aa).

Residues 1-6 (MASLRR) lie on the Cytoplasmic side of the membrane. A helical; Signal-anchor for type II membrane protein transmembrane segment spans residues 7-27 (VKVLLVLNLIAVAGFVLFLAK). Residues 28–598 (CRPIAVRSGD…QRWTIKNSIK (571 aa)) are Lumenal-facing. A glycan (N-linked (GlcNAc...) asparagine) is linked at Asn50. 2 disulfide bridges follow: Cys142–Cys373 and Cys364–Cys443. The interval 151-262 (LPQISIIFIF…AGWAEPVLSR (112 aa)) is catalytic subdomain A. The substrate site is built by Asp192 and Arg223. Mn(2+) is bound by residues Asp246, His248, and His378. The interval 319 to 381 (PIRTPAMIGC…PCSRVAHIER (63 aa)) is catalytic subdomain B. The substrate site is built by Arg381 and Tyr386. N-linked (GlcNAc...) asparagine glycans are attached at residues Asn461 and Asn486. Residues 465 to 594 (AYGELRNNKA…SCTGQRWTIK (130 aa)) form the Ricin B-type lectin domain. 3 cysteine pairs are disulfide-bonded: Cys478-Cys494, Cys526-Cys541, and Cys568-Cys586.

This sequence belongs to the glycosyltransferase 2 family. GalNAc-T subfamily. It depends on Mn(2+) as a cofactor. In terms of tissue distribution, highly expressed in brain and heart. Weakly expressed in kidney, liver, lung and spleen.

It localises to the golgi apparatus membrane. The catalysed reaction is L-seryl-[protein] + UDP-N-acetyl-alpha-D-galactosamine = a 3-O-[N-acetyl-alpha-D-galactosaminyl]-L-seryl-[protein] + UDP + H(+). It carries out the reaction L-threonyl-[protein] + UDP-N-acetyl-alpha-D-galactosamine = a 3-O-[N-acetyl-alpha-D-galactosaminyl]-L-threonyl-[protein] + UDP + H(+). It participates in protein modification; protein glycosylation. In terms of biological role, may catalyze the initial reaction in O-linked oligosaccharide biosynthesis, the transfer of an N-acetyl-D-galactosamine residue to a serine or threonine residue on the protein receptor. The protein is Polypeptide N-acetylgalactosaminyltransferase 17 of Homo sapiens (Human).